The following is a 338-amino-acid chain: Malate dehydrogenase, mitochondrial (338 aa).

The transit peptide at 1–24 (MLSALARPVGAALRRSFSTSAQNN) directs the protein to the mitochondrion. NAD(+) is bound by residues 31 to 37 (GASGGIG) and D57. S33 is a glycosylation site (O-linked (GlcNAc) serine). K78 and K91 each carry N6-acetyllysine; alternate. N6-succinyllysine; alternate occurs at positions 78 and 91. Positions 104 and 110 each coordinate substrate. NAD(+) contacts are provided by residues N117 and 140–142 (ISN). Residue N142 participates in substrate binding. N6-acetyllysine is present on K165. R176 is a binding site for substrate. K185 is subject to N6-acetyllysine; alternate. K185 carries the post-translational modification N6-succinyllysine; alternate. The Proton acceptor role is filled by H200. Position 203 is an N6-succinyllysine (K203). N6-acetyllysine; alternate is present on residues K215 and K239. N6-succinyllysine; alternate occurs at positions 215 and 239. K239 is modified (N6-malonyllysine; alternate). At S246 the chain carries Phosphoserine. M251 lines the NAD(+) pocket. Position 269 is an N6-succinyllysine (K269). N6-acetyllysine; alternate occurs at positions 296, 301, 307, 314, and 324. N6-succinyllysine; alternate occurs at positions 296, 301, 307, 314, and 324. K307 carries the N6-malonyllysine; alternate modification. S326 is subject to Phosphoserine. An N6-acetyllysine; alternate mark is found at K328, K329, and K335. N6-succinyllysine; alternate is present on K328. K329 bears the N6-malonyllysine; alternate mark. An N6-succinyllysine; alternate modification is found at K335.

Belongs to the LDH/MDH superfamily. MDH type 1 family. In terms of assembly, homodimer. In terms of processing, acetylation is enhanced after treatment either with trichostin A (TCA) or with nicotinamide (NAM) with the appearance of tri- and tetraacetylations. Glucose also increases acetylation. Expressed in flagella of epididymal sperm.

The protein resides in the mitochondrion matrix. The enzyme catalyses (S)-malate + NAD(+) = oxaloacetate + NADH + H(+). Enzyme activity is enhanced by acetylation. This Rattus norvegicus (Rat) protein is Malate dehydrogenase, mitochondrial (Mdh2).